Here is a 275-residue protein sequence, read N- to C-terminus: 3-deoxy-manno-octulosonate cytidylyltransferase (275 aa).

The protein belongs to the KdsB family.

It is found in the cytoplasm. The enzyme catalyses 3-deoxy-alpha-D-manno-oct-2-ulosonate + CTP = CMP-3-deoxy-beta-D-manno-octulosonate + diphosphate. It participates in nucleotide-sugar biosynthesis; CMP-3-deoxy-D-manno-octulosonate biosynthesis; CMP-3-deoxy-D-manno-octulosonate from 3-deoxy-D-manno-octulosonate and CTP: step 1/1. Its pathway is bacterial outer membrane biogenesis; lipopolysaccharide biosynthesis. Its function is as follows. Activates KDO (a required 8-carbon sugar) for incorporation into bacterial lipopolysaccharide in Gram-negative bacteria. The sequence is that of 3-deoxy-manno-octulosonate cytidylyltransferase from Psychrobacter sp. (strain PRwf-1).